We begin with the raw amino-acid sequence, 189 residues long: Protein Rex (189 aa).

The span at Met-1–Pro-16 shows a compositional bias: basic residues. The interval Met-1–Asp-27 is disordered. Residues Pro-2 to Thr-18 carry the Nuclear localization signal, and RNA-binding (RxRE) motif. Positions Arg-56–Ser-70 are homomultimerization. Position 70 is a phosphoserine; by host (Ser-70). The segment at Ser-73–Thr-189 is disordered. Residues Asp-80–Ser-94 are compositionally biased toward low complexity. Positions Leu-82–Asp-93 match the Nuclear export signal motif. Positions Pro-123–Thr-131 are homomultimerization. The segment covering Leu-143 to Pro-164 has biased composition (polar residues). At Thr-174 the chain carries Phosphothreonine; by host. Ser-177 bears the Phosphoserine; by host mark. Over residues Phe-178–Thr-189 the composition is skewed to pro residues.

It belongs to the deltaretrovirus Rex protein family. In terms of assembly, homomultimer. Multimeric assembly is essential for activity and involves XPO1. Binds to human XPO1 and KPNB1. Interacts (via N-terminal nuclear localization signal) with human NPM1.

Its subcellular location is the host nucleus. The protein localises to the host nucleolus. It is found in the host cytoplasm. Its function is as follows. Rex escorts unspliced gag-pro-pol and singly spliced env mRNAs out of the nucleus of infected cells. These mRNAs carry a recognition sequence called Rex responsive element (RxRE or XRE) located at the 3' region of the long terminal repeat (LTR). This function is essential since most HTLV proteins are translated from unspliced or partially spliced pre-mRNAs that cannot exit the nucleus by the pathway used by fully processed cellular mRNAs. Rex itself is translated from a fully spliced mRNA that probably readily exits the nucleus. Rex's nuclear localization signal (NLS) binds directly to KPNB1/importin beta-1 without previous binding to KPNA1/importin alpha-1. KPNB1 binds to the GDP bound form of RAN (Ran-GDP) and targets Rex to the nucleus. In the nucleus, the conversion from Ran-GDP to Ran-GTP dissociates Rex from KPNB1 and allows Rex's binding to the RRE in viral pre-mRNAs. Rex multimerizes on the RRE via cooperative assembly. This multimerization is critical for its full biological activity, since it may shield the viral RNA from being spliced or down-regulated, and probably exposes Rex's nuclear export signal (NES) to the surface. Rex can then form a complex with XPO1/CRM1, RANBP3 and Ran-GTP, leading to nuclear export of the complex. Conversion from Ran-GTP to Ran-GDP mediates dissociation of the Rex/RRE/XPO1/RANBP3/RAN complex, so that Rex can return to the nucleus for a subsequent round of export. The polypeptide is Protein Rex (Human T-cell leukemia virus 1 (strain Japan ATK-1 subtype A) (HTLV-1)).